Reading from the N-terminus, the 121-residue chain is Large ribosomal subunit protein bL20 (121 aa).

Belongs to the bacterial ribosomal protein bL20 family.

Functionally, binds directly to 23S ribosomal RNA and is necessary for the in vitro assembly process of the 50S ribosomal subunit. It is not involved in the protein synthesizing functions of that subunit. This Mycoplasma mycoides subsp. mycoides SC (strain CCUG 32753 / NCTC 10114 / PG1) protein is Large ribosomal subunit protein bL20.